The sequence spans 479 residues: Aspartyl/glutamyl-tRNA(Asn/Gln) amidotransferase subunit B (479 aa).

Belongs to the GatB/GatE family. GatB subfamily. As to quaternary structure, heterotrimer of A, B and C subunits.

It carries out the reaction L-glutamyl-tRNA(Gln) + L-glutamine + ATP + H2O = L-glutaminyl-tRNA(Gln) + L-glutamate + ADP + phosphate + H(+). It catalyses the reaction L-aspartyl-tRNA(Asn) + L-glutamine + ATP + H2O = L-asparaginyl-tRNA(Asn) + L-glutamate + ADP + phosphate + 2 H(+). In terms of biological role, allows the formation of correctly charged Asn-tRNA(Asn) or Gln-tRNA(Gln) through the transamidation of misacylated Asp-tRNA(Asn) or Glu-tRNA(Gln) in organisms which lack either or both of asparaginyl-tRNA or glutaminyl-tRNA synthetases. The reaction takes place in the presence of glutamine and ATP through an activated phospho-Asp-tRNA(Asn) or phospho-Glu-tRNA(Gln). The sequence is that of Aspartyl/glutamyl-tRNA(Asn/Gln) amidotransferase subunit B from Alcanivorax borkumensis (strain ATCC 700651 / DSM 11573 / NCIMB 13689 / SK2).